The sequence spans 830 residues: Cadherin-16 (830 aa).

The first 21 residues, 1 to 21 (MISARPWLLYLSVIQAFTTEA), serve as a signal peptide directing secretion. Topologically, residues 22-788 (QPAESLHTEV…MKGMPTKLSA (767 aa)) are extracellular. Cadherin domains are found at residues 27–128 (LHTE…VPQF), 133–237 (YRAQ…SIVE), 244–338 (EPVH…APVC), 343–451 (PTVN…APEF), 457–566 (GPVT…PLKL), and 571–667 (YETS…VPAL). N-linked (GlcNAc...) asparagine glycans are attached at residues Asn-519, Asn-604, and Asn-724. The segment at 668–788 (TLSAGPSRHL…MKGMPTKLSA (121 aa)) is ectodomain G. The helical transmembrane segment at 789–809 (VGVLLGTLAAIGFILILVFTH) threads the bilayer. Over 810-830 (LALARKDLDQPADSVPLKAAV) the chain is Cytoplasmic. The residue at position 823 (Ser-823) is a Phosphoserine.

Kidney specific.

Its subcellular location is the cell membrane. In terms of biological role, cadherins are calcium-dependent cell adhesion proteins. They preferentially interact with themselves in a homophilic manner in connecting cells; cadherins may thus contribute to the sorting of heterogeneous cell types. The sequence is that of Cadherin-16 (Cdh16) from Mus musculus (Mouse).